The sequence spans 96 residues: Small ribosomal subunit protein bS6 (96 aa).

It belongs to the bacterial ribosomal protein bS6 family.

In terms of biological role, binds together with bS18 to 16S ribosomal RNA. This Acidothermus cellulolyticus (strain ATCC 43068 / DSM 8971 / 11B) protein is Small ribosomal subunit protein bS6.